Consider the following 509-residue polypeptide: UDP-N-acetylmuramyl-tripeptide synthetase (509 aa).

Position 30 (S30) interacts with UDP-N-acetyl-alpha-D-muramoyl-L-alanyl-D-glutamate. Residue G111 to T117 participates in ATP binding. UDP-N-acetyl-alpha-D-muramoyl-L-alanyl-D-glutamate-binding positions include S155 to T156, T182, and R192. K224 is modified (N6-carboxylysine).

It belongs to the MurCDEF family. MurE subfamily. Carboxylation is probably crucial for Mg(2+) binding and, consequently, for the gamma-phosphate positioning of ATP.

Its subcellular location is the cytoplasm. It functions in the pathway cell wall biogenesis; peptidoglycan biosynthesis. In terms of biological role, catalyzes the addition of an amino acid to the nucleotide precursor UDP-N-acetylmuramoyl-L-alanyl-D-glutamate (UMAG) in the biosynthesis of bacterial cell-wall peptidoglycan. The protein is UDP-N-acetylmuramyl-tripeptide synthetase of Roseiflexus sp. (strain RS-1).